The chain runs to 343 residues: Mitochondrial amidoxime-reducing component 1 (343 aa).

Residues 1 to 25 (MSNTVFSGAVGPLRAAALSISRHRL) are Mitochondrial matrix-facing. Residues 26-44 (PLLCAAGLGLTAVASWMWW) form a helical; Signal-anchor for type II membrane protein membrane-spanning segment. Over 45 to 343 (RKRQGEAEDL…DPVYRVTRKG (299 aa)) the chain is Cytoplasmic. Mo-molybdopterin-binding residues include Lys69, Ser70, and Arg94. Residues 95 to 186 (HWLVVTEEGN…SSQPYRLVHF (92 aa)) form an MOSC N-terminal region region. In terms of domain architecture, MOSC spans 181 to 339 (YRLVHFEADV…IRVGDPVYRV (159 aa)). Positions 215, 242, 276, 277, and 321 each coordinate Mo-molybdopterin.

Requires Mo-molybdopterin as cofactor.

Its subcellular location is the mitochondrion outer membrane. It is found in the membrane. It carries out the reaction N(omega)-hydroxy-L-arginine + 2 Fe(II)-[cytochrome b5] + 2 H(+) = L-arginine + 2 Fe(III)-[cytochrome b5] + H2O. Its function is as follows. Catalyzes the reduction of N-oxygenated molecules, acting as a counterpart of cytochrome P450 and flavin-containing monooxygenases in metabolic cycles. As a component of prodrug-converting system, reduces a multitude of N-hydroxylated prodrugs particularly amidoximes, leading to increased drug bioavailability. May be involved in mitochondrial N(omega)-hydroxy-L-arginine (NOHA) reduction, regulating endogenous nitric oxide levels and biosynthesis. Postulated to cleave the N-OH bond of N-hydroxylated substrates in concert with electron transfer from NADH to cytochrome b5 reductase then to cytochrome b5, the ultimate electron donor that primes the active site for substrate reduction. The chain is Mitochondrial amidoxime-reducing component 1 (mtarc1) from Xenopus laevis (African clawed frog).